The primary structure comprises 359 residues: Archaemetzincin-2 (359 aa).

Position 254 (histidine 254) interacts with Zn(2+). Glutamate 255 (proton acceptor) is an active-site residue. Positions 258, 264, 265, 270, 289, and 292 each coordinate Zn(2+).

Belongs to the peptidase M54 family. Requires Zn(2+) as cofactor. In terms of tissue distribution, predominantly expressed in testis.

In terms of biological role, probable zinc metalloprotease. This chain is Archaemetzincin-2 (Amz2), found in Mus musculus (Mouse).